The primary structure comprises 499 residues: Aspartyl/glutamyl-tRNA(Asn/Gln) amidotransferase subunit B (499 aa).

It belongs to the GatB/GatE family. GatB subfamily. As to quaternary structure, heterotrimer of A, B and C subunits.

The enzyme catalyses L-glutamyl-tRNA(Gln) + L-glutamine + ATP + H2O = L-glutaminyl-tRNA(Gln) + L-glutamate + ADP + phosphate + H(+). It carries out the reaction L-aspartyl-tRNA(Asn) + L-glutamine + ATP + H2O = L-asparaginyl-tRNA(Asn) + L-glutamate + ADP + phosphate + 2 H(+). Allows the formation of correctly charged Asn-tRNA(Asn) or Gln-tRNA(Gln) through the transamidation of misacylated Asp-tRNA(Asn) or Glu-tRNA(Gln) in organisms which lack either or both of asparaginyl-tRNA or glutaminyl-tRNA synthetases. The reaction takes place in the presence of glutamine and ATP through an activated phospho-Asp-tRNA(Asn) or phospho-Glu-tRNA(Gln). This is Aspartyl/glutamyl-tRNA(Asn/Gln) amidotransferase subunit B from Salinispora tropica (strain ATCC BAA-916 / DSM 44818 / JCM 13857 / NBRC 105044 / CNB-440).